The primary structure comprises 225 residues: Ribonuclease 3 (225 aa).

Residues Met7 to Gly129 form the RNase III domain. Glu42 is a binding site for Mg(2+). The active site involves Asp46. Positions 115 and 118 each coordinate Mg(2+). Residue Glu118 is part of the active site. Residues Asp155–Arg225 form the DRBM domain.

This sequence belongs to the ribonuclease III family. Homodimer. Mg(2+) serves as cofactor.

The protein resides in the cytoplasm. The enzyme catalyses Endonucleolytic cleavage to 5'-phosphomonoester.. Digests double-stranded RNA. Involved in the processing of primary rRNA transcript to yield the immediate precursors to the large and small rRNAs (23S and 16S). Processes some mRNAs, and tRNAs when they are encoded in the rRNA operon. Processes pre-crRNA and tracrRNA of type II CRISPR loci if present in the organism. In Shewanella sediminis (strain HAW-EB3), this protein is Ribonuclease 3.